The following is a 251-amino-acid chain: MTVSINEVSKYFSKQTGTVQVLENINFQLEKGDFVTVIGPSGCGKSTLLKIVAGLDNDFEGEIIIDGERITKPSKKQGFIFQEHRLFPWLTVEENIAADLSLKDKYVKDKVKEWVEIVRLDGFEKSYPKEISGGMSQRVAIARALLRDPSVLLLDEPFGALDAFTRSHLQEVLLNIWEQKKTTMIFVTHDIDEAIYLSNRIVIMSAKPGEIHKVIENNLSYPRNKTSQSFQQLRTKVLQQFEHGGLIQTSI.

The region spanning 3–231 is the ABC transporter domain; it reads VSINEVSKYF…PRNKTSQSFQ (229 aa). 39–46 contributes to the ATP binding site; sequence GPSGCGKS.

This sequence belongs to the ABC transporter superfamily. Aliphatic sulfonates importer (TC 3.A.1.17.2) family. In terms of assembly, the complex is composed of two ATP-binding proteins (SsuB), two transmembrane proteins (SsuC) and a solute-binding protein (SsuA).

The protein localises to the cell membrane. The enzyme catalyses ATP + H2O + aliphatic sulfonate-[sulfonate-binding protein]Side 1 = ADP + phosphate + aliphatic sulfonateSide 2 + [sulfonate-binding protein]Side 1.. In terms of biological role, part of the ABC transporter complex SsuABC involved in aliphatic sulfonates import. Responsible for energy coupling to the transport system. The sequence is that of Aliphatic sulfonates import ATP-binding protein SsuB from Bacillus thuringiensis subsp. konkukian (strain 97-27).